A 921-amino-acid polypeptide reads, in one-letter code: MADQNTPGDKKLGVPSKTLTLKPRVETGTVRQSFPHGRSKQVVVEKRGTKRRVGDGAPDAPHAPEPTVAKAPPPPPPSNRPSGPRPSGGQQRGGSGVVLRTLTEDERSARASALADARVRDLEERRQAEEEARRRAEREAAERAEREAAEARRKAEEERHRHEEEAKRKAELEAKKRFGEGEAPRPAAAAPQPTVSAPARPAQAPGRPQGAPGSRPQQIGGPSSRPGGSQPGGARPAGPRPAGGGPLGRAPAAVAAGPDEDEGPRQIRRGPGGAARPAPPPKTTHKPGPQKQRGRLTVVTALNADDVRERSIASFRRRTQRLKGHAANEQKEKLVREVTIPEAITIQELANRMSERAVDVIRLLMRQGAMHKITDVIDADTAQLIAEELGHTVKRVAASDVEEGLFDVVDDSTDTEPRSPVVTVMGHVDHGKTSLLDALRHANVVSGEAGGITQHIGAYQVTAPDSGKKITFIDTPGHAAFTAMRARGAKVTDIVVLVVAADDGVMPQTIEAINHAKAAKVPMIVAINKIDKPDARPERVRTELLQHEVQVESLGGDVVDVEVSAKNKTNLDRLLEMIALQADILDLKTNSDRPAEGTVIEAKLDRGRGPVATVLVQRGTLRVGDIIVAGAEMGRVRALISDQGETLQEAGPSVPVEVLGFNGPPEAGDRLAVVENEARARQVTSYRAHQKRENAAASISGMRGSLEQMMSQLKTAGRKEFPLVIKADVQGSLEAILGSLEKLGTEEVAARILHAGVGGISESDVTLAEGFNAAIIGFSVRANKEAAALAKRNGIEIRYYNIIYDLVDDVKKAMSGLLAPTLRETMLGNAQILEVFNISKVGKVAGCRVTDGTVERGANVRLIRDNVVVHEGKLSTLKRFKDEVKDVQAGQECGMAFENYGDMRVGDVIECYRVETIQRSL.

The interval Met1 to Leu296 is disordered. The segment covering Arg80 to Gly89 has biased composition (low complexity). Residues Ala117 to Ala183 show a composition bias toward basic and acidic residues. Low complexity-rich tracts occupy residues Pro184–Ala237 and Gly248–Gly257. A tr-type G domain is found at Pro417–Asp586. The G1 stretch occupies residues Gly426–Thr433. Gly426 to Thr433 lines the GTP pocket. The G2 stretch occupies residues Gly451 to His455. Residues Asp474–Gly477 form a G3 region. GTP-binding positions include Asp474–His478 and Asn528–Asp531. A G4 region spans residues Asn528–Asp531. The tract at residues Ser564–Lys566 is G5.

It belongs to the TRAFAC class translation factor GTPase superfamily. Classic translation factor GTPase family. IF-2 subfamily.

The protein localises to the cytoplasm. In terms of biological role, one of the essential components for the initiation of protein synthesis. Protects formylmethionyl-tRNA from spontaneous hydrolysis and promotes its binding to the 30S ribosomal subunits. Also involved in the hydrolysis of GTP during the formation of the 70S ribosomal complex. The polypeptide is Translation initiation factor IF-2 (Bradyrhizobium sp. (strain ORS 278)).